Reading from the N-terminus, the 302-residue chain is NAD kinase 2 (302 aa).

Residue Asp78 is the Proton acceptor of the active site. NAD(+) contacts are provided by residues 78 to 79, 152 to 153, Asp182, 193 to 198, and Ala217; these read DG, NE, and TAYALS.

Belongs to the NAD kinase family. A divalent metal cation serves as cofactor.

Its subcellular location is the cytoplasm. It catalyses the reaction NAD(+) + ATP = ADP + NADP(+) + H(+). In terms of biological role, involved in the regulation of the intracellular balance of NAD and NADP, and is a key enzyme in the biosynthesis of NADP. Catalyzes specifically the phosphorylation on 2'-hydroxyl of the adenosine moiety of NAD to yield NADP. This is NAD kinase 2 from Parasynechococcus marenigrum (strain WH8102).